Here is a 138-residue protein sequence, read N- to C-terminus: Small ribosomal subunit protein uS11c (138 aa).

Residues 1–23 are disordered; sequence MAKPILRIGSRKNTRSGSRKNVR. Positions 9-23 are enriched in basic residues; the sequence is GSRKNTRSGSRKNVR.

It belongs to the universal ribosomal protein uS11 family. As to quaternary structure, part of the 30S ribosomal subunit.

The protein resides in the plastid. It localises to the chloroplast. The protein is Small ribosomal subunit protein uS11c of Barbarea verna (Land cress).